We begin with the raw amino-acid sequence, 358 residues long: Peptide chain release factor 1 (358 aa).

Q235 carries the N5-methylglutamine modification. Residues 284–309 (KVESERSASRKSQVGSGDRSERIRTY) form a disordered region.

Belongs to the prokaryotic/mitochondrial release factor family. In terms of processing, methylated by PrmC. Methylation increases the termination efficiency of RF1.

The protein localises to the cytoplasm. Peptide chain release factor 1 directs the termination of translation in response to the peptide chain termination codons UAG and UAA. The sequence is that of Peptide chain release factor 1 from Bartonella tribocorum (strain CIP 105476 / IBS 506).